A 390-amino-acid chain; its full sequence is MTTPSPTPPLAAAEVAAAAGLQQRDLLAVLDRVGLEPAVAFLVHDLTARCDTPDNPDAARIGLAVEHSGHRTERVLAVRKGEPVRVDEETAGPPPVRLTFDLADLVRGVYGPPPGPGAGLFRVERDDAWFVKNADDAEPFRIFESYMRAVDVLVRAATSRPGDLGRLAARHASDKWGLWHWFTPLYEHHFARLRHQPVRVLELGIGGYQNPDEGGGSLKMWRSYFPQGRIFGVDYFPKHGLDEDRIHTLQGSQDDAGFLRRVAEEHGPFDIVIDDGSHVAGHQQTAFRTLFPAVRNGGFYVIEDLWTAYCPGYGGAATARAEGRTSIGLLKSLLDDLHYEEWTAPEPAAPGFAAPSLVGVHVYRNLAVLEKGRNSEGTIPFFAPREIDYV.

S-adenosyl-L-methionine is bound by residues 202–208, Ser217, Asp234, 252–253, and Asp275; these read ELGIGGY and SQ. Asp275 contributes to the Mg(2+) binding site. Catalysis depends on His278, which acts as the Proton acceptor. The Mg(2+) site is built by Glu303 and Asp304.

This sequence belongs to the methyltransferase OleY/MycE family. Mg(2+) serves as cofactor.

The enzyme catalyses 8-demethyl-8-(2-O-methyl-alpha-L-rhamnosyl)-tetracenomycin C + S-adenosyl-L-methionine = 8-demethyl-8-(2,3-di-O-methyl-alpha-L-rhamnosyl)-tetracenomycin C + S-adenosyl-L-homocysteine + H(+). The protein operates within antibiotic biosynthesis. Its function is as follows. O-methyltransferase involved in the biosynthesis of the permethylated L-rhamnose moiety of elloramycin, an antitumor polyketide. Mediates the methylation of the hydroxy groups at the 3'-position after the sugar moiety has been attached to the aglycon. The chain is 8-demethyl-8-(2-methoxy-alpha-L-rhamnosyl)-tetracenomycin-C 3'-O-methyltransferase from Streptomyces olivaceus.